A 243-amino-acid polypeptide reads, in one-letter code: Ornithine decarboxylase antizyme 3 (243 aa).

Serine 6, serine 9, and serine 12 each carry phosphoserine.

It belongs to the ODC antizyme family. Interacts with ODC1 and thereby sterically blocks ODC homodimerization. Interacts with AZIN2; this interaction disrupts the interaction between the antizyme and ODC1. Interacts with GGN. Testis specific. Expressed throughout the differentiation process from spermatids to spermatozoa in the inner part of the seminiferous tubules.

The protein resides in the nucleus. The protein localises to the cytoplasm. Ornithine decarboxylase (ODC) antizyme protein that negatively regulates ODC activity and intracellular polyamine biosynthesis and uptake in response to increased intracellular polyamine levels. Binds to ODC monomers, inhibiting the assembly of the functional ODC homodimers. Does not target the ODC monomers for degradation, which allows a protein synthesis-independent restoration of ODC activity. Stabilizes AZIN2 by interfering with its ubiquitination. Involved in the translocation of AZNI2 from ER-Golgi intermediate compartment (ERGIC) to the cytosol. Probably plays a key role in spermatogenesis by regulating the intracellular concentration of polyamines in haploid germ cells. The polypeptide is Ornithine decarboxylase antizyme 3 (Oaz3) (Mus musculus (Mouse)).